We begin with the raw amino-acid sequence, 103 residues long: Small ribosomal subunit protein eS25 (103 aa).

Residues 1 to 23 (MGGEDMAKKKAPSAKEGEKQQGF) are disordered.

Belongs to the eukaryotic ribosomal protein eS25 family.

The protein is Small ribosomal subunit protein eS25 (rps25e) of Aeropyrum pernix (strain ATCC 700893 / DSM 11879 / JCM 9820 / NBRC 100138 / K1).